Consider the following 485-residue polypeptide: Sulfated surface glycoprotein 185 (485 aa).

The N-terminal stretch at 1-20 (MSKLLLVALFGAIAVVATSA) is a signal peptide. An N-linked (GlcNAc...) asparagine glycan is attached at asparagine 193. The interval 212–317 (LSGPNVNPIG…PPVPPPPSPP (106 aa)) is disordered. Composition is skewed to pro residues over residues 221-234 (GPAP…PSPQ) and 241-317 (PPSP…PSPP). An N-linked (GlcNAc...) asparagine glycan is attached at asparagine 347.

Polymer. Post-translationally, intersubunit cross-links are formed between saccharide chains rather than between polypeptide chains. Hydroxylated on proline residues in the Pro-rich central domain. In terms of processing, glycosylated; contains sulfate-substituted glycans.

In terms of biological role, the extracellular matrix (ECM) of Volvox contains insoluble fibrous layers that surround individual cells at a distance to form contiguous cellular compartments. SSG 185 is the monomeric precursor of this substructure (C3Z structure). The sequence is that of Sulfated surface glycoprotein 185 from Volvox carteri (Green alga).